The primary structure comprises 703 residues: tRNA 5-methylaminomethyl-2-thiouridine biosynthesis bifunctional protein MnmC (703 aa).

Residues 1–281 form a tRNA (mnm(5)s(2)U34)-methyltransferase region; sequence MTAKPQKSCQ…KPAALVAKDH (281 aa). The tract at residues 286-703 is FAD-dependent cmnm(5)s(2)U34 oxidoreductase; sequence VGGGLASANL…LRKLLKGKAL (418 aa).

In the N-terminal section; belongs to the methyltransferase superfamily. tRNA (mnm(5)s(2)U34)-methyltransferase family. The protein in the C-terminal section; belongs to the DAO family. The cofactor is FAD.

It localises to the cytoplasm. The catalysed reaction is 5-aminomethyl-2-thiouridine(34) in tRNA + S-adenosyl-L-methionine = 5-methylaminomethyl-2-thiouridine(34) in tRNA + S-adenosyl-L-homocysteine + H(+). In terms of biological role, catalyzes the last two steps in the biosynthesis of 5-methylaminomethyl-2-thiouridine (mnm(5)s(2)U) at the wobble position (U34) in tRNA. Catalyzes the FAD-dependent demodification of cmnm(5)s(2)U34 to nm(5)s(2)U34, followed by the transfer of a methyl group from S-adenosyl-L-methionine to nm(5)s(2)U34, to form mnm(5)s(2)U34. The chain is tRNA 5-methylaminomethyl-2-thiouridine biosynthesis bifunctional protein MnmC from Shewanella sp. (strain MR-7).